The chain runs to 554 residues: Eukaryotic translation initiation factor 3 subunit D-2 (554 aa).

An RNA gate region spans residues 291–305 (QFDLLTVNETALEPP). The segment at 530-554 (NAFDSDGNEDEETSEDRPFLKSMAN) is disordered.

The protein belongs to the eIF-3 subunit D family. In terms of assembly, component of the eukaryotic translation initiation factor 3 (eIF-3) complex. The eIF-3 complex interacts with pix.

It is found in the cytoplasm. Functionally, mRNA cap-binding component of the eukaryotic translation initiation factor 3 (eIF-3) complex, which is involved in protein synthesis of a specialized repertoire of mRNAs and, together with other initiation factors, stimulates binding of mRNA and methionyl-tRNAi to the 40S ribosome. The eIF-3 complex specifically targets and initiates translation of a subset of mRNAs involved in cell proliferation. In the eIF-3 complex, eif3d specifically recognizes and binds the 7-methylguanosine cap of a subset of mRNAs. This is Eukaryotic translation initiation factor 3 subunit D-2 from Drosophila mojavensis (Fruit fly).